The sequence spans 2931 residues: Probable polyketide synthase 9/36 (2931 aa).

Residues glutamate 11–glutamate 442 form the Ketosynthase family 3 (KS3) domain. Catalysis depends on for beta-ketoacyl synthase activity residues cysteine 181, histidine 323, and histidine 362. Residues glycine 635–tyrosine 668 form an acyl/malonyl transferase region. Serine 645 (for acyl/malonyl transferase activity) is an active-site residue. The tract at residues isoleucine 925–asparagine 1047 is N-terminal hotdog fold. One can recognise a PKS/mFAS DH domain in the interval isoleucine 925 to serine 1209. The active-site Proton acceptor; for dehydratase activity is the histidine 959. The segment at asparagine 1064–serine 1209 is C-terminal hotdog fold. The Proton donor; for dehydratase activity role is filled by aspartate 1122. The chain crosses the membrane as a helical span at residues leucine 2293–threonine 2313. The region spanning threonine 2429–leucine 2506 is the Carrier domain. O-(pantetheine 4'-phosphoryl)serine is present on serine 2466. Residues lysine 2553–valine 2573 traverse the membrane as a helical segment.

Pantetheine 4'-phosphate is required as a cofactor.

The protein localises to the membrane. In terms of biological role, probable polyketide synthase. This chain is Probable polyketide synthase 9/36 (pks9), found in Dictyostelium discoideum (Social amoeba).